We begin with the raw amino-acid sequence, 443 residues long: MVRGRIFRLSVRDVRFPTSLGGHGSDAMHTDPDYSAAYVVIETDAEDGIKGCGITFTLGKGTEVVVCAVNALAHHVLNKDLKDIVGDFRGFYRQLTSDGQPRWIGPEKGVVHLATAAVLNAVWDLWAKQEGKPVWKLLVDMDPRTLVSCIDFRYITDVLTEEDALEILQKGQVGKKEREKQMLAQGYPAYTTSCAWLGYSDDTLKQLCAQALKDGWTRFKVKVGADLQDDVRRCQIIRDMIGLEKTLMMDANQRWDVPEAVEWMSKLAKFKPLWIEEPTSPDDILGHATISKALVPLGIGIATGEQCHNRVIFKQLLQAKALQFLQIDSCRLGSVNENLSVLLMAKKFEIPVCPHAGGVGLCELVQHLIIFDYISVSASLENRMCEYVDHLHEHFKYPVMIQRASYMPPKDPGYSTEMKEESVKKHQYPDGEVWKKLLAAQEN.

Substrate contacts are provided by residues 24-26 (GSD) and tyrosine 34. Serine 148 is modified (phosphoserine). Lysine 220 contributes to the substrate binding site. Catalysis depends on lysine 222, which acts as the Proton donor/acceptor. Aspartate 250 lines the Mg(2+) pocket. Substrate is bound by residues asparagine 252, glutamate 276, glutamate 305, 355–357 (HAG), and glutamate 386. Mg(2+) is bound by residues glutamate 276 and glutamate 305. Residue histidine 355 is part of the active site.

It belongs to the mandelate racemase/muconate lactonizing enzyme family. ENOSF1 subfamily. It depends on Mg(2+) as a cofactor. Could be sumoylated.

The protein localises to the mitochondrion. The catalysed reaction is L-fuconate = 2-dehydro-3-deoxy-L-fuconate + H2O. In terms of biological role, plays a role in the catabolism of L-fucose, a sugar that is part of the carbohydrates that are attached to cellular glycoproteins. Catalyzes the dehydration of L-fuconate to 2-keto-3-deoxy-L-fuconate by the abstraction of the 2-proton to generate an enediolate intermediate that is stabilized by the magnesium ion. May down-regulate thymidylate synthase activity, possibly already at the RNA level, by promoting the degradation of TYMS mRNA via an antisense RNA-based mechanism. The chain is Mitochondrial enolase superfamily member 1 (ENOSF1) from Pongo abelii (Sumatran orangutan).